A 320-amino-acid chain; its full sequence is MARSKIALIGAGQIGGTLAHLAGLKELGDVVLFDIVDGVPQGKALDIAESAPVDGFDAKYSGASDYSAIAGADVVIVTAGVPRKPGMSRDDLIGINLKVMEAVGAGIKEHAPDAFVICITNPLDAMVWALQKFSGLPTNKVVGMAGVLDSARFRHFLAEEFGVSVEDVTAFVLGGHGDDMVPLTRYSTVAGVPLTDLVKLGWTTQEKLDAMVERTRKGGGEIVNLLKTGSAFYAPAASAIAMAESYLRDKKRVLPCAAYLDGQYGIDGLYVGVPVVIGENGVERVLEVTFNDDEKAMFEKSVNSVKGLIEACKSVNDKLA.

NAD(+) contacts are provided by residues 10–15 and Asp-34; that span reads GAGQIG. Residues Arg-83 and Arg-89 each coordinate substrate. NAD(+) contacts are provided by residues Asn-96 and 119–121; that span reads ITN. The substrate site is built by Asn-121 and Arg-152. His-176 (proton acceptor) is an active-site residue.

Belongs to the LDH/MDH superfamily. MDH type 3 family.

It carries out the reaction (S)-malate + NAD(+) = oxaloacetate + NADH + H(+). Functionally, catalyzes the reversible oxidation of malate to oxaloacetate. In Methylorubrum extorquens (strain CM4 / NCIMB 13688) (Methylobacterium extorquens), this protein is Malate dehydrogenase.